We begin with the raw amino-acid sequence, 249 residues long: Triosephosphate isomerase (249 aa).

Residues Asn-12 and Lys-14 each contribute to the substrate site. Lys-14 bears the N6-acetyllysine mark. Tyr-68 bears the 3'-nitrotyrosine mark. Ser-80 is modified (phosphoserine). Catalysis depends on His-96, which acts as the Electrophile. At Ser-106 the chain carries Phosphoserine. A Glycyl lysine isopeptide (Lys-Gly) (interchain with G-Cter in SUMO1) cross-link involves residue Lys-142. Residue Lys-149 is modified to N6-succinyllysine. Lys-156 is subject to N6-acetyllysine; alternate. N6-succinyllysine; alternate is present on Lys-156. Ser-159 is modified (phosphoserine). The active-site Proton acceptor is the Glu-166. Thr-173 carries the post-translational modification Phosphothreonine. Residue Lys-194 is modified to N6-acetyllysine; alternate. Position 194 is an N6-succinyllysine; alternate (Lys-194). N6-methyllysine; alternate is present on Lys-194. Ser-198 carries the post-translational modification Phosphoserine. Tyr-209 carries the 3'-nitrotyrosine modification. Ser-212 is modified (phosphoserine). Residue Thr-214 is modified to Phosphothreonine. At Ser-223 the chain carries Phosphoserine. An N6-acetyllysine modification is found at Lys-238.

This sequence belongs to the triosephosphate isomerase family. In terms of assembly, homodimer.

The protein resides in the cytoplasm. The enzyme catalyses dihydroxyacetone phosphate = methylglyoxal + phosphate. It carries out the reaction D-glyceraldehyde 3-phosphate = dihydroxyacetone phosphate. It participates in carbohydrate degradation; glycolysis; D-glyceraldehyde 3-phosphate from glycerone phosphate: step 1/1. It functions in the pathway carbohydrate biosynthesis; gluconeogenesis. In terms of biological role, triosephosphate isomerase is an extremely efficient metabolic enzyme that catalyzes the interconversion between dihydroxyacetone phosphate (DHAP) and D-glyceraldehyde-3-phosphate (G3P) in glycolysis and gluconeogenesis. Its function is as follows. It is also responsible for the non-negligible production of methylglyoxal a reactive cytotoxic side-product that modifies and can alter proteins, DNA and lipids. In Bos taurus (Bovine), this protein is Triosephosphate isomerase (TPI1).